Here is a 63-residue protein sequence, read N- to C-terminus: Large ribosomal subunit protein uL29 (63 aa).

Belongs to the universal ribosomal protein uL29 family.

This is Large ribosomal subunit protein uL29 from Photorhabdus laumondii subsp. laumondii (strain DSM 15139 / CIP 105565 / TT01) (Photorhabdus luminescens subsp. laumondii).